Consider the following 117-residue polypeptide: Large ribosomal subunit protein uL24 (117 aa).

Belongs to the universal ribosomal protein uL24 family. Part of the 50S ribosomal subunit.

One of two assembly initiator proteins, it binds directly to the 5'-end of the 23S rRNA, where it nucleates assembly of the 50S subunit. Its function is as follows. One of the proteins that surrounds the polypeptide exit tunnel on the outside of the subunit. The chain is Large ribosomal subunit protein uL24 from Nostoc punctiforme (strain ATCC 29133 / PCC 73102).